We begin with the raw amino-acid sequence, 208 residues long: Protein-L-isoaspartate O-methyltransferase (208 aa).

Ser-59 is an active-site residue.

Belongs to the methyltransferase superfamily. L-isoaspartyl/D-aspartyl protein methyltransferase family.

The protein resides in the cytoplasm. The catalysed reaction is [protein]-L-isoaspartate + S-adenosyl-L-methionine = [protein]-L-isoaspartate alpha-methyl ester + S-adenosyl-L-homocysteine. Functionally, catalyzes the methyl esterification of L-isoaspartyl residues in peptides and proteins that result from spontaneous decomposition of normal L-aspartyl and L-asparaginyl residues. It plays a role in the repair and/or degradation of damaged proteins. The sequence is that of Protein-L-isoaspartate O-methyltransferase from Escherichia coli O7:K1 (strain IAI39 / ExPEC).